A 372-amino-acid chain; its full sequence is Histidinol-phosphate aminotransferase (372 aa).

K229 bears the N6-(pyridoxal phosphate)lysine mark.

It belongs to the class-II pyridoxal-phosphate-dependent aminotransferase family. Histidinol-phosphate aminotransferase subfamily. As to quaternary structure, homodimer. It depends on pyridoxal 5'-phosphate as a cofactor.

The enzyme catalyses L-histidinol phosphate + 2-oxoglutarate = 3-(imidazol-4-yl)-2-oxopropyl phosphate + L-glutamate. It participates in amino-acid biosynthesis; L-histidine biosynthesis; L-histidine from 5-phospho-alpha-D-ribose 1-diphosphate: step 7/9. This chain is Histidinol-phosphate aminotransferase, found in Bdellovibrio bacteriovorus (strain ATCC 15356 / DSM 50701 / NCIMB 9529 / HD100).